The chain runs to 412 residues: Putative odorant receptor 85d (412 aa).

At 1–56 the chain is on the cytoplasmic side; it reads MLTKKDTQSAKEQEKLKAIPLHSFLKYANVFYLSIGMMAYDHKYSQKWKEVLLHWT. The helical transmembrane segment at 57–77 threads the bilayer; that stretch reads FIAQMVNLNTVLISELIYVFL. Residues 78 to 84 lie on the Extracellular side of the membrane; it reads AIGKGSN. A helical transmembrane segment spans residues 85 to 105; that stretch reads FLEATMNLSFIGFVIVGDFKI. Topologically, residues 106-152 are cytoplasmic; it reads WNISRQRKRLTQVVSRLEELHPQGLAQQEPYNIGHHLSGYSRYSKFY. A helical transmembrane segment spans residues 153–173; the sequence is FGMHMVLIWTYNLYWAVYYLV. Topologically, residues 174-219 are extracellular; that stretch reads CDFWLGMRQFERMLPYYCWVPWDWSTGYSYYFMYISQNIGGQACLS. Residues 220 to 240 form a helical membrane-spanning segment; the sequence is GQLAADMLMCALVTLVVMHFI. Residues 241-282 are Cytoplasmic-facing; sequence RLSAHIESHVAGIGSFQHDLEFLQATVAYHQSLIHLCQDINE. The helical transmembrane segment at 283–303 threads the bilayer; sequence IFGVSLLSNFVSSSFIICFVG. Residues 304 to 314 are Extracellular-facing; that stretch reads FQMTIGSKIDN. A helical transmembrane segment spans residues 315-335; the sequence is LVMLVLFLFCAMVQVFMIATH. Over 336–382 the chain is Cytoplasmic; sequence AQRLVDASEQIGQAVYNHDWFRADLRYRKMLILIIKRAQQPSRLKAT. The helical transmembrane segment at 383-403 threads the bilayer; that stretch reads MFLNISLVTVSDLLQLSYKFF. Over 404–412 the chain is Extracellular; the sequence is ALLRTMYVN.

Belongs to the insect chemoreceptor superfamily. Heteromeric odorant receptor channel (TC 1.A.69) family. Or49a subfamily. In terms of assembly, interacts with Orco. Complexes exist early in the endomembrane system in olfactory sensory neurons (OSNs), coupling these complexes to the conserved ciliary trafficking pathway. As to expression, expressed in olfactory sensory neurons in the maxillary palp.

The protein localises to the cell membrane. Odorant receptor which mediates acceptance or avoidance behavior, depending on its substrates. The odorant receptor repertoire encodes a large collection of odor stimuli that vary widely in identity, intensity, and duration. May form a complex with Orco to form odorant-sensing units, providing sensitive and prolonged odorant signaling and calcium permeability. This chain is Putative odorant receptor 85d (Or85d), found in Drosophila melanogaster (Fruit fly).